Here is a 337-residue protein sequence, read N- to C-terminus: Endochitinase 37 (337 aa).

The first 25 residues, 1–25, serve as a signal peptide directing secretion; the sequence is MTRLLDASFLLLPVIASTLFGTASA. The 300-residue stretch at 38–337 folds into the GH18 domain; sequence KVLQGYWENW…GSKNWTFGDN (300 aa). The active-site Proton donor is Glu160. Asn331 is a glycosylation site (N-linked (GlcNAc...) asparagine).

Belongs to the glycosyl hydrolase 18 family. Chitinase class V subfamily. As to quaternary structure, monomer.

Its subcellular location is the secreted. The enzyme catalyses Random endo-hydrolysis of N-acetyl-beta-D-glucosaminide (1-&gt;4)-beta-linkages in chitin and chitodextrins.. Secreted chitinase involved in the degradation of chitin, a component of the cell walls of fungi and exoskeletal elements of some animals (including worms and arthropods). Plays a morphogenetic role during apical growth, cell division and differentiation (cell wall morphogenesis). May be involved in the degradation and further assimilation of phytopathogenic fungi, namely mycoparasitism, the major mechanism accounting for the antagonistic activity against phytopathogenic fungi displayed by Trichoderma. The chain is Endochitinase 37 (chit37) from Trichoderma harzianum (Hypocrea lixii).